The sequence spans 268 residues: Tryptophan synthase alpha chain (268 aa).

Active-site proton acceptor residues include E47 and D58.

This sequence belongs to the TrpA family. As to quaternary structure, tetramer of two alpha and two beta chains.

The enzyme catalyses (1S,2R)-1-C-(indol-3-yl)glycerol 3-phosphate + L-serine = D-glyceraldehyde 3-phosphate + L-tryptophan + H2O. Its pathway is amino-acid biosynthesis; L-tryptophan biosynthesis; L-tryptophan from chorismate: step 5/5. The alpha subunit is responsible for the aldol cleavage of indoleglycerol phosphate to indole and glyceraldehyde 3-phosphate. The chain is Tryptophan synthase alpha chain from Chlorobium phaeobacteroides (strain BS1).